Here is a 553-residue protein sequence, read N- to C-terminus: Zinc finger protein 324A (553 aa).

Positions 1–72 constitute a KRAB domain; the sequence is MAFEDVAVYF…SGTDTTLSRT (72 aa). The Nuclear localization signal motif lies at 130–135; sequence PSRERK. The segment at 186–221 is disordered; the sequence is GRQPRTPERQKPCAQEVPGRTFGSAQDLEAAGGRGH. 9 consecutive C2H2-type zinc fingers follow at residues 257–279, 285–307, 313–335, 341–363, 369–391, 397–419, 425–447, 453–475, and 481–503; these read FECR…LRTH, YECA…QRIH, YACP…QRIH, FRCS…RKIH, YACA…ERTH, FVCA…QRVH, FACP…QLLH, FRCV…RRIH, and FVCT…QRIH. The interval 502–553 is disordered; the sequence is IHTGEKTVRRSRASLHPQARSVAGASSEGAPAKETEPTPASGPAAVSQPAEV.

It belongs to the krueppel C2H2-type zinc-finger protein family. As to expression, expressed at high levels in the spleen, thymus, and PBMC, at low levels in the prostate, ovary, small intestine, colon (mucosal lining), placenta, lung, and pancreas, and very weakly expressed in the liver and kidney.

The protein localises to the nucleus. In terms of biological role, may be involved in transcriptional regulation. May be involved in regulation of cell proliferation. This chain is Zinc finger protein 324A (ZNF324), found in Homo sapiens (Human).